The chain runs to 803 residues: Xylosyltransferase sqv-6 (803 aa).

Over 3–13 (VVGGVNTNYRH) the chain is Cytoplasmic. The helical; Signal-anchor for type II membrane protein transmembrane segment at 14–34 (YALVIVLFFFLNVYLLYSAQN) threads the bilayer. Over 35–803 (SVQIRKDEGE…GWDEEARILR (769 aa)) the chain is Lumenal. A disulfide bond links cysteine 63 and cysteine 91. N-linked (GlcNAc...) asparagine glycans are attached at residues asparagine 95, asparagine 175, and asparagine 224. Intrachain disulfides connect cysteine 107–cysteine 446, cysteine 465–cysteine 479, and cysteine 467–cysteine 477. Residues 115-209 (IDQRIGCFLD…FNAVEIFRTD (95 aa)) form the WSC domain. UDP-alpha-D-xylose contacts are provided by residues aspartate 265 and 294–296 (TIW). Asparagine 326 is a glycosylation site (N-linked (GlcNAc...) asparagine). UDP-alpha-D-xylose is bound at residue 399–400 (DW). Residues serine 480 and 506-507 (RK) each bind UDP-alpha-D-xylose. Asparagine 615 and asparagine 718 each carry an N-linked (GlcNAc...) asparagine glycan. A disulfide bond links cysteine 769 and cysteine 775.

Belongs to the glycosyltransferase 14 family. XylT subfamily. A divalent metal cation is required as a cofactor.

The protein resides in the endoplasmic reticulum membrane. The protein localises to the golgi apparatus membrane. The catalysed reaction is UDP-alpha-D-xylose + L-seryl-[protein] = 3-O-(beta-D-xylosyl)-L-seryl-[protein] + UDP + H(+). It functions in the pathway glycan metabolism; chondroitin sulfate biosynthesis. It participates in glycan metabolism; heparan sulfate biosynthesis. Functionally, catalyzes the first step in biosynthesis of glycosaminoglycan. Transfers D-xylose from UDP-D-xylose to specific serine residues of the core protein. This chain is Xylosyltransferase sqv-6, found in Caenorhabditis briggsae.